Reading from the N-terminus, the 111-residue chain is Cytochrome c (111 aa).

An N-acetylalanine modification is found at alanine 1. The heme c site is built by cysteine 22, cysteine 25, and histidine 26. The residue at position 80 (lysine 80) is an N6,N6,N6-trimethyllysine. Position 88 (methionine 88) interacts with heme c. Position 94 is an N6,N6,N6-trimethyllysine (lysine 94).

This sequence belongs to the cytochrome c family. Binds 1 heme c group covalently per subunit.

The protein localises to the mitochondrion intermembrane space. Functionally, electron carrier protein. The oxidized form of the cytochrome c heme group can accept an electron from the heme group of the cytochrome c1 subunit of cytochrome reductase. Cytochrome c then transfers this electron to the cytochrome oxidase complex, the final protein carrier in the mitochondrial electron-transport chain. This is Cytochrome c from Sesamum indicum (Oriental sesame).